Consider the following 130-residue polypeptide: Small ribosomal subunit protein uS8 (130 aa).

It belongs to the universal ribosomal protein uS8 family. Part of the 30S ribosomal subunit.

In terms of biological role, one of the primary rRNA binding proteins, it binds directly to 16S rRNA central domain where it helps coordinate assembly of the platform of the 30S subunit. This Methanococcus maripaludis (strain C7 / ATCC BAA-1331) protein is Small ribosomal subunit protein uS8.